The sequence spans 269 residues: 4-hydroxy-tetrahydrodipicolinate reductase (269 aa).

NAD(+)-binding positions include 8–13 (GAAGRM) and glutamate 34. Arginine 35 serves as a coordination point for NADP(+). Residues 98-100 (GTT) and 122-125 (APNY) each bind NAD(+). Histidine 155 functions as the Proton donor/acceptor in the catalytic mechanism. Histidine 156 provides a ligand contact to (S)-2,3,4,5-tetrahydrodipicolinate. The Proton donor role is filled by lysine 159. 165-166 (GT) is a binding site for (S)-2,3,4,5-tetrahydrodipicolinate.

The protein belongs to the DapB family.

It is found in the cytoplasm. The enzyme catalyses (S)-2,3,4,5-tetrahydrodipicolinate + NAD(+) + H2O = (2S,4S)-4-hydroxy-2,3,4,5-tetrahydrodipicolinate + NADH + H(+). It carries out the reaction (S)-2,3,4,5-tetrahydrodipicolinate + NADP(+) + H2O = (2S,4S)-4-hydroxy-2,3,4,5-tetrahydrodipicolinate + NADPH + H(+). The protein operates within amino-acid biosynthesis; L-lysine biosynthesis via DAP pathway; (S)-tetrahydrodipicolinate from L-aspartate: step 4/4. Its function is as follows. Catalyzes the conversion of 4-hydroxy-tetrahydrodipicolinate (HTPA) to tetrahydrodipicolinate. This chain is 4-hydroxy-tetrahydrodipicolinate reductase, found in Vibrio vulnificus (strain CMCP6).